Reading from the N-terminus, the 348-residue chain is Protein RecA (348 aa).

Residue 66–73 (GPESSGKT) coordinates ATP.

The protein belongs to the RecA family.

It localises to the cytoplasm. Can catalyze the hydrolysis of ATP in the presence of single-stranded DNA, the ATP-dependent uptake of single-stranded DNA by duplex DNA, and the ATP-dependent hybridization of homologous single-stranded DNAs. It interacts with LexA causing its activation and leading to its autocatalytic cleavage. This Legionella pneumophila (strain Paris) protein is Protein RecA.